A 243-amino-acid polypeptide reads, in one-letter code: Small ribosomal subunit protein eS4 (243 aa).

Residues 43-105 enclose the S4 RNA-binding domain; that stretch reads IPLLYIVRDY…TGEHYRVLPN (63 aa).

The protein belongs to the eukaryotic ribosomal protein eS4 family. Part of the 30S ribosomal subunit.

This is Small ribosomal subunit protein eS4 from Pyrococcus furiosus (strain ATCC 43587 / DSM 3638 / JCM 8422 / Vc1).